Here is a 521-residue protein sequence, read N- to C-terminus: Protein NRT1/ PTR FAMILY 4.2 (521 aa).

12 helical membrane passes run 30–50, 65–85, 89–109, 133–153, 172–192, 204–224, 297–317, 338–358, 381–401, 413–433, 451–471, and 498–518; these read IVCV…FNFV, ANMV…GGFI, FVTH…GLIL, AILF…KASL, FFDW…TVVL, FNIS…GLPF, FLGL…VAQL, IPVP…IPLY, IGLG…VEAK, ISVL…MLTL, ISTA…TTLV, and LFYV…IFWA.

Belongs to the major facilitator superfamily. Proton-dependent oligopeptide transporter (POT/PTR) (TC 2.A.17) family. Expressed in siliques.

Its subcellular location is the membrane. Involved in abscisic acid transport. The sequence is that of Protein NRT1/ PTR FAMILY 4.2 (NPF4.2) from Arabidopsis thaliana (Mouse-ear cress).